The sequence spans 330 residues: Ribosomal RNA small subunit methyltransferase C (330 aa).

It belongs to the methyltransferase superfamily. RsmC family. As to quaternary structure, monomer.

It localises to the cytoplasm. It carries out the reaction guanosine(1207) in 16S rRNA + S-adenosyl-L-methionine = N(2)-methylguanosine(1207) in 16S rRNA + S-adenosyl-L-homocysteine + H(+). Its function is as follows. Specifically methylates the guanine in position 1207 of 16S rRNA in the 30S particle. The protein is Ribosomal RNA small subunit methyltransferase C of Haemophilus influenzae (strain PittGG).